We begin with the raw amino-acid sequence, 188 residues long: MSIKSDKWIRRMAEQHGMIEPFEPGQVREADGRKIVSYGTSSYGYDIRCADEFKIFTNINSTIVDPKNFDEKSFVDFKGDVCIIPPNSFALARTMEYFRIPRSVLTICLGKSTYARCGIIVNVTPFEPEWEGYVTLEFSNTTPLPAKIYAGEGCAQVLFFESDEICETSYADRGGKYQGQHGVTLPKT.

DCTP-binding positions include 111-116 (KSTYAR), 135-137 (TLE), Gln156, Tyr170, and Gln180. The Proton donor/acceptor role is filled by Glu137.

Belongs to the dCTP deaminase family. In terms of assembly, homotrimer.

It carries out the reaction dCTP + H2O + H(+) = dUTP + NH4(+). The protein operates within pyrimidine metabolism; dUMP biosynthesis; dUMP from dCTP (dUTP route): step 1/2. Its function is as follows. Catalyzes the deamination of dCTP to dUTP. The protein is dCTP deaminase of Cupriavidus taiwanensis (strain DSM 17343 / BCRC 17206 / CCUG 44338 / CIP 107171 / LMG 19424 / R1) (Ralstonia taiwanensis (strain LMG 19424)).